A 311-amino-acid chain; its full sequence is Ribonuclease HIII (311 aa).

Residues 95–311 (MSIVGSDEVG…NTEKAFRLLK (217 aa)) enclose the RNase H type-2 domain. A divalent metal cation is bound by residues D101, E102, and D206.

The protein belongs to the RNase HII family. RnhC subfamily. The cofactor is Mn(2+). Requires Mg(2+) as cofactor.

It is found in the cytoplasm. It carries out the reaction Endonucleolytic cleavage to 5'-phosphomonoester.. Its function is as follows. Endonuclease that specifically degrades the RNA of RNA-DNA hybrids. This chain is Ribonuclease HIII, found in Bacillus cereus (strain ZK / E33L).